We begin with the raw amino-acid sequence, 267 residues long: 4-hydroxy-tetrahydrodipicolinate reductase (267 aa).

NAD(+)-binding positions include 8-13 (GAAGRM) and Glu-34. Arg-35 contacts NADP(+). NAD(+)-binding positions include 98 to 100 (GST) and 122 to 125 (APNM). The active-site Proton donor/acceptor is the His-155. Residue His-156 participates in (S)-2,3,4,5-tetrahydrodipicolinate binding. Lys-159 (proton donor) is an active-site residue. 165–166 (GT) is a (S)-2,3,4,5-tetrahydrodipicolinate binding site.

This sequence belongs to the DapB family.

It localises to the cytoplasm. It catalyses the reaction (S)-2,3,4,5-tetrahydrodipicolinate + NAD(+) + H2O = (2S,4S)-4-hydroxy-2,3,4,5-tetrahydrodipicolinate + NADH + H(+). It carries out the reaction (S)-2,3,4,5-tetrahydrodipicolinate + NADP(+) + H2O = (2S,4S)-4-hydroxy-2,3,4,5-tetrahydrodipicolinate + NADPH + H(+). It functions in the pathway amino-acid biosynthesis; L-lysine biosynthesis via DAP pathway; (S)-tetrahydrodipicolinate from L-aspartate: step 4/4. In terms of biological role, catalyzes the conversion of 4-hydroxy-tetrahydrodipicolinate (HTPA) to tetrahydrodipicolinate. This chain is 4-hydroxy-tetrahydrodipicolinate reductase, found in Geotalea daltonii (strain DSM 22248 / JCM 15807 / FRC-32) (Geobacter daltonii).